Consider the following 255-residue polypeptide: Type III pantothenate kinase (255 aa).

6 to 13 contributes to the ATP binding site; sequence DVGNTHIV. Substrate-binding positions include Tyr100 and 107 to 110; that span reads GADR. The active-site Proton acceptor is Asp109. Position 129 (Asp129) interacts with K(+). ATP is bound at residue Thr132. Thr184 is a substrate binding site.

It belongs to the type III pantothenate kinase family. As to quaternary structure, homodimer. It depends on NH4(+) as a cofactor. The cofactor is K(+).

The protein localises to the cytoplasm. It carries out the reaction (R)-pantothenate + ATP = (R)-4'-phosphopantothenate + ADP + H(+). It participates in cofactor biosynthesis; coenzyme A biosynthesis; CoA from (R)-pantothenate: step 1/5. In terms of biological role, catalyzes the phosphorylation of pantothenate (Pan), the first step in CoA biosynthesis. The chain is Type III pantothenate kinase from Ruminiclostridium cellulolyticum (strain ATCC 35319 / DSM 5812 / JCM 6584 / H10) (Clostridium cellulolyticum).